Reading from the N-terminus, the 499-residue chain is Serine/threonine-protein phosphatase 5 (499 aa).

Residues 1-24 (MAMAEGERTECAETPRDEPPADGT) form a disordered region. A2 is modified (N-acetylalanine). TPR repeat units lie at residues 28–61 (AEEL…NPGN), 62–95 (AIYY…DKKY), and 96–129 (IKGY…KPND). The tract at residues 184-499 (GKVTITFMKD…ANTLLQLGMM (316 aa)) is catalytic. Mn(2+) is bound by residues D242, H244, and D271. H244 contacts substrate. Substrate is bound by residues R275 and 303-304 (NH). N303 contacts Mn(2+). The active-site Proton donor/acceptor is the H304. A Mn(2+)-binding site is contributed by H352. Substrate is bound by residues R400 and H427. Mn(2+) is bound at residue H427. Positions 495-499 (QLGMM) are required for autoinhibition.

It belongs to the PPP phosphatase family. PP-5 (PP-T) subfamily. In terms of assembly, probably forms a complex composed of chaperones HSP90 and HSP70, co-chaperones STIP1/HOP, CDC37, PPP5C, PTGES3/p23, TSC1 and client protein TSC2. Probably forms a complex composed of chaperones HSP90 and HSP70, co-chaperones CDC37, PPP5C, TSC1 and client protein TSC2, CDK4, AKT, RAF1 and NR3C1; this complex does not contain co-chaperones STIP1/HOP and PTGES3/p23. Part of a complex with HSP90/HSP90AA1 and steroid receptors. Interacts (via TPR repeats) with HSP90AA1 (via TPR repeat-binding motif) or HSPA1A/HSPA1B; the interaction is direct and activates the phosphatase activity. Dissociates from HSPA1A/HSPA1B and HSP90AA1 in response to arachidonic acid. Interacts with CPNE1 (via VWFA domain). Interacts with CDC16, CDC27. Interacts with KLHDC10 (via the 6 Kelch repeats); inhibits the phosphatase activity on MAP3K5. Interacts with ATM and ATR; both interactions are induced by DNA damage and enhance ATM and ATR kinase activity. Interacts with RAD17; reduced by DNA damage. Interacts with nuclear receptors such as NR3C1/GCR and PPARG (activated by agonist); regulates their transactivation activities. Interacts (via TPR repeats) with S100 proteins S100A1, S100A2, S100A6, S100B and S100P; the interactions are calcium-dependent, strongly activate PPP5C phosphatase activity and compete with HSP90AA1 and MAP3K5 interactions. Interacts with SMAD2 and SMAD3 but not with SMAD1; decreases SMAD3 phosphorylation and protein levels. Interacts (via TPR repeats) with CRY1 and CRY2; the interaction with CRY2 down-regulates the phosphatase activity on CSNK1E. Interacts (via TPR repeats) with the active form of RAC1, GNA12 or GNA13; these interactions activate the phosphatase activity and translocate PPP5C to the cell membrane. Interacts with FLCN. It depends on Mg(2+) as a cofactor. Mn(2+) is required as a cofactor. Post-translationally, activated by at least two different proteolytic cleavages producing a 56 kDa and a 50 kDa form. As to expression, expressed in liver (at protein level) and brain, enriched in suprachiasmatic nuclei.

It localises to the nucleus. The protein resides in the cytoplasm. It is found in the cell membrane. It carries out the reaction O-phospho-L-seryl-[protein] + H2O = L-seryl-[protein] + phosphate. The catalysed reaction is O-phospho-L-threonyl-[protein] + H2O = L-threonyl-[protein] + phosphate. Its activity is regulated as follows. Autoinhibited. In the autoinhibited state, the TPR domain interacts with the catalytic region and prevents substrate access to the catalytic pocket. Allosterically activated by various polyunsaturated fatty acids, free long-chain fatty-acids and long-chain fatty acyl-CoA esters, arachidonic acid being the most effective activator. HSP90A and probably RAC1, GNA12 and GNA13 can also release the autoinhibition by the TPR repeat. Activation by RAC1, GNA12 and GNA13 is synergistic with the one produced by fatty acids binding. Inhibited by okadaic acid. Its function is as follows. Serine/threonine-protein phosphatase that dephosphorylates a myriad of proteins involved in different signaling pathways including the kinases CSNK1E, ASK1/MAP3K5, PRKDC and RAF1, the nuclear receptors NR3C1, PPARG, ESR1 and ESR2, SMAD proteins and TAU/MAPT. Implicated in wide ranging cellular processes, including apoptosis, differentiation, DNA damage response, cell survival, regulation of ion channels or circadian rhythms, in response to steroid and thyroid hormones, calcium, fatty acids, TGF-beta as well as oxidative and genotoxic stresses. Participates in the control of DNA damage response mechanisms such as checkpoint activation and DNA damage repair through, for instance, the regulation ATM/ATR-signaling and dephosphorylation of PRKDC and TP53BP1. Inhibits ASK1/MAP3K5-mediated apoptosis induced by oxidative stress. Plays a positive role in adipogenesis, mainly through the dephosphorylation and activation of PPARG transactivation function. Also dephosphorylates and inhibits the anti-adipogenic effect of NR3C1. Regulates the circadian rhythms, through the dephosphorylation and activation of CSNK1E. May modulate TGF-beta signaling pathway by the regulation of SMAD3 phosphorylation and protein expression levels. Dephosphorylates and may play a role in the regulation of TAU/MAPT. Through their dephosphorylation, may play a role in the regulation of ions channels such as KCNH2. Dephosphorylate FNIP1, disrupting interaction with HSP90AA1/Hsp90. The sequence is that of Serine/threonine-protein phosphatase 5 (Ppp5c) from Mus musculus (Mouse).